The chain runs to 85 residues: Large ribosomal subunit protein bL27 (85 aa).

The interval 1–22 is disordered; that stretch reads MAHKKAGGSTNNGRDSESKRLG.

Belongs to the bacterial ribosomal protein bL27 family.

This chain is Large ribosomal subunit protein bL27, found in Psychromonas ingrahamii (strain DSM 17664 / CCUG 51855 / 37).